Here is a 304-residue protein sequence, read N- to C-terminus: Coenzyme PQQ synthesis protein B (304 aa).

This sequence belongs to the PqqB family.

The protein operates within cofactor biosynthesis; pyrroloquinoline quinone biosynthesis. Functionally, may be involved in the transport of PQQ or its precursor to the periplasm. In Pseudomonas aeruginosa (strain UCBPP-PA14), this protein is Coenzyme PQQ synthesis protein B.